The following is a 139-amino-acid chain: Large-conductance mechanosensitive channel (139 aa).

The next 2 membrane-spanning stretches (helical) occupy residues 19 to 39 (VAVI…ADVI) and 81 to 101 (GNFL…FMVV).

Belongs to the MscL family. Homopentamer.

The protein resides in the cell inner membrane. Its function is as follows. Channel that opens in response to stretch forces in the membrane lipid bilayer. May participate in the regulation of osmotic pressure changes within the cell. In Nitrobacter hamburgensis (strain DSM 10229 / NCIMB 13809 / X14), this protein is Large-conductance mechanosensitive channel.